The chain runs to 661 residues: MPAFPTLDLDGKLGKMDRVVLGWTAVFWLTAMVEGLQVTVPDKKKVAMLFQPTVLRCHFSTSSHQPAVVQWKFKSYCQDRMGESLGMSSPRAQALSKRNLEWDPYLDCLDSRRTVRVVASKQGSTVTLGDFYRGREITIVHDADLQIGKLMWGDSGLYYCIITTPDDLEGKNEDSVELLVLGRTGLLADLLPSFAVEIMPEWVFVGLVILGIFLFFVLVGICWCQCCPHSCCCYVRCPCCPDSCCCPQALYEAGKAAKAGYPPSVSGVPGPYSIPSVPLGGAPSSGMLMDKPHPPPLAPSDSTGGSHSVRKGYRIQADKERDSMKVLYYVEKELAQFDPARRMRGRYNNTISELSSLHDDDSNFRQSYHQMRNKQFPMSGDLESNPDYWSGVMGGNSGTNRGPALEYNKEDRESFRHSQQRSKSEMLSRKNFATGVPAVSMDELAAFADSYGQRSRRANGNSHEARAGSRFERSESRAHGAFYQDGSLDEYYGRGRSREPPGDGERGWTYSPAPARRRPPEDAPLPRLVSRTPGTAPKYDHSYLSSVLERQARPESSSRGGSLETPSKLGAQLGPRSASYYAWSPPTTYKAGASEGEDEDDAADEDALPPYSELELSRGELSRGPSYRGRDLSFHSNSEKRRKKEPAKKPGDFPTRMSLVV.

Positions 1–35 (MPAFPTLDLDGKLGKMDRVVLGWTAVFWLTAMVEG) are cleaved as a signal peptide. In terms of domain architecture, Ig-like V-type spans 36–177 (LQVTVPDKKK…LEGKNEDSVE (142 aa)). Residues 36 to 201 (LQVTVPDKKK…PSFAVEIMPE (166 aa)) lie on the Lumenal side of the membrane. Cys-57 and Cys-160 are joined by a disulfide. The helical transmembrane segment at 202-222 (WVFVGLVILGIFLFFVLVGIC) threads the bilayer. At 223-661 (WCQCCPHSCC…DFPTRMSLVV (439 aa)) the chain is on the cytoplasmic side. Disordered regions lie at residues 288–310 (LMDKPHPPPLAPSDSTGGSHSVR), 410–429 (EDRESFRHSQQRSKSEMLSR), and 453–661 (QRSR…SLVV). Basic and acidic residues-rich tracts occupy residues 410 to 428 (EDRESFRHSQQRSKSEMLS) and 463 to 478 (HEARAGSRFERSESRA). Position 487 is a phosphoserine (Ser-487). The span at 491 to 506 (YYGRGRSREPPGDGER) shows a compositional bias: basic and acidic residues. At Arg-559 the chain carries Omega-N-methylarginine. Ser-594 carries the post-translational modification Phosphoserine. Over residues 595–607 (EGEDEDDAADEDA) the composition is skewed to acidic residues. Over residues 628–639 (RGRDLSFHSNSE) the composition is skewed to basic and acidic residues.

This sequence belongs to the immunoglobulin superfamily. LISCH7 family. In terms of assembly, interacts with MARVELD2 and OCLN. Interacts with P4HB and HSPA5; the interaction with HSPA5 stabilizes ILDR2 expression. Interacts (via C-terminus) with TRA2A, TRA2B and SRSF1. As to expression, expressed in epithelial tissues, mainly in liver, kidney and colon.

Its subcellular location is the endoplasmic reticulum membrane. The protein localises to the cell junction. It localises to the tight junction. The protein resides in the nucleus. Functionally, may be involved in ER stress pathways with effects on lipid homeostasis and insulin secretion. With ILDR1 and LSR, involved in the maintain of the epithelial barrier function through the recruitment of MARVELD2/tricellulin to tricellular tight junctions. Also functions as a B7-like protein family member expressed on immune cells and inflamed tissue and with T-cell inhibitory activity. In the inner ear, may regulate alternative pre-mRNA splicing via binding to TRA2A, TRA2B and SRSF1. The sequence is that of Immunoglobulin-like domain-containing receptor 2 from Mus musculus (Mouse).